Consider the following 543-residue polypeptide: Aspartate/alanine antiporter (543 aa).

Transmembrane regions (helical) follow at residues 4–26 (IGNFLVGTPVFTIFICLALGYLL), 33–55 (SFTLGATVGVLIVALLIGQLGVF), 88–110 (FGAKIVYATLIFLVSAFIVAYAC), 117–139 (GPGIAAGIIAGGLTQSAVIGSSL), 159–178 (IPIVYTLTYVFGTIGVLIFL), 362–381 (IINYSWFALGIALSAALGIV), 385–407 (VSGVPIALGGGTASLIVGLVQSI), 428–450 (SIGLNLFIATVGLSAAKTFISAI), 455–477 (ISVLLIGAVISILPHIITFVICY), and 520–542 (VAPAYAIGNIFLTLMGPIFIVLL).

It belongs to the AAE transporter (TC 2.A.81) family.

Its subcellular location is the cell membrane. Functionally, catalyzes the electrogenic exchange of aspartate with alanine. The protein is Aspartate/alanine antiporter (aspT) of Tetragenococcus halophilus (Pediococcus halophilus).